Reading from the N-terminus, the 253-residue chain is Acetylglutamate kinase (253 aa).

Substrate contacts are provided by residues Gly40–Gly41, Arg62, and Asn154.

It belongs to the acetylglutamate kinase family. ArgB subfamily.

The protein resides in the cytoplasm. It catalyses the reaction N-acetyl-L-glutamate + ATP = N-acetyl-L-glutamyl 5-phosphate + ADP. It participates in amino-acid biosynthesis; L-arginine biosynthesis; N(2)-acetyl-L-ornithine from L-glutamate: step 2/4. Its function is as follows. Catalyzes the ATP-dependent phosphorylation of N-acetyl-L-glutamate. The polypeptide is Acetylglutamate kinase (Staphylococcus saprophyticus subsp. saprophyticus (strain ATCC 15305 / DSM 20229 / NCIMB 8711 / NCTC 7292 / S-41)).